We begin with the raw amino-acid sequence, 193 residues long: Ion-translocating oxidoreductase complex subunit A (193 aa).

The next 6 membrane-spanning stretches (helical) occupy residues 5-25 (LLLL…FLGL), 39-59 (IGMG…SYLM), 63-83 (ILIP…VIAV), 102-122 (LLGI…VALL), 134-154 (IIYG…FAAM), and 171-191 (SIAM…TGLI).

Belongs to the NqrDE/RnfAE family. The complex is composed of six subunits: RnfA, RnfB, RnfC, RnfD, RnfE and RnfG.

The protein resides in the cell inner membrane. In terms of biological role, part of a membrane-bound complex that couples electron transfer with translocation of ions across the membrane. This chain is Ion-translocating oxidoreductase complex subunit A, found in Aeromonas hydrophila subsp. hydrophila (strain ATCC 7966 / DSM 30187 / BCRC 13018 / CCUG 14551 / JCM 1027 / KCTC 2358 / NCIMB 9240 / NCTC 8049).